The chain runs to 162 residues: Transcription elongation factor GreB (162 aa).

Residues 52–76 (GKRRLREIDRRIRFLSKRLEALQII) adopt a coiled-coil conformation.

The protein belongs to the GreA/GreB family. GreB subfamily.

Necessary for efficient RNA polymerase transcription elongation past template-encoded arresting sites. The arresting sites in DNA have the property of trapping a certain fraction of elongating RNA polymerases that pass through, resulting in locked ternary complexes. Cleavage of the nascent transcript by cleavage factors such as GreA or GreB allows the resumption of elongation from the new 3'terminus. GreB releases sequences of up to 9 nucleotides in length. The chain is Transcription elongation factor GreB from Haemophilus ducreyi (strain 35000HP / ATCC 700724).